Reading from the N-terminus, the 112-residue chain is Large ribosomal subunit protein eL30 (112 aa).

Belongs to the eukaryotic ribosomal protein eL30 family.

This is Large ribosomal subunit protein eL30 (rpl30) from Dictyostelium discoideum (Social amoeba).